The chain runs to 369 residues: MTKTIVVKIGTSSLTQPETGQLALSTIATLAETLSYLRQQGNQVILVSSGAVGVGCARLGLTERPKAIALKQAVAAVGQGRLMRVYDDLFTTLQQPIAQVLLTRSDLVQRSRYLNVYNTFRELLALGVIPVVNENDTVAVDELKFGDNDTLSALVASLVEADWLFLLTDVDRLYSADPRSVPDARPISLVTSIKELADLQVQTGSQGSQWGTGGMMTKISAARIAIAAGVRTVITQGRYPRNIEKIIQGELIGTHFQPQPEPTSARKRWIAYGLVPTGKLYLDSGAIAAIVKAGKSLLPAGVKTVAGEFEPQDAVQLLDPQGNEIARGLVNYSSKDLQQICGRHSKEISTILGYVGAETVIHRDNLVLT.

Residue Lys-8 participates in ATP binding. 3 residues coordinate substrate: Ser-49, Asp-136, and Asn-148. Residues 168–169 (TD) and 212–218 (TGGMMTK) each bind ATP. A PUA domain is found at 277-355 (TGKLYLDSGA…KEISTILGYV (79 aa)).

It belongs to the glutamate 5-kinase family.

It localises to the cytoplasm. The catalysed reaction is L-glutamate + ATP = L-glutamyl 5-phosphate + ADP. It functions in the pathway amino-acid biosynthesis; L-proline biosynthesis; L-glutamate 5-semialdehyde from L-glutamate: step 1/2. In terms of biological role, catalyzes the transfer of a phosphate group to glutamate to form L-glutamate 5-phosphate. This is Glutamate 5-kinase from Trichormus variabilis (strain ATCC 29413 / PCC 7937) (Anabaena variabilis).